The chain runs to 197 residues: Holliday junction branch migration complex subunit RuvA (197 aa).

The segment at 1–64 is domain I; that stretch reads MYEYIKGTYM…EDFIGLYGFG (64 aa). The segment at 65-143 is domain II; sequence SKEELELFNK…VNLDEGIQTD (79 aa). The interval 144–149 is flexible linker; sequence SNDIKV. Residues 149–197 form a domain III region; sequence VSSKILEEAKEALMSLGYSEKECEKALKNVEEKESLEIIIKESLKFLMN.

This sequence belongs to the RuvA family. As to quaternary structure, homotetramer. Forms an RuvA(8)-RuvB(12)-Holliday junction (HJ) complex. HJ DNA is sandwiched between 2 RuvA tetramers; dsDNA enters through RuvA and exits via RuvB. An RuvB hexamer assembles on each DNA strand where it exits the tetramer. Each RuvB hexamer is contacted by two RuvA subunits (via domain III) on 2 adjacent RuvB subunits; this complex drives branch migration. In the full resolvosome a probable DNA-RuvA(4)-RuvB(12)-RuvC(2) complex forms which resolves the HJ.

The protein resides in the cytoplasm. The RuvA-RuvB-RuvC complex processes Holliday junction (HJ) DNA during genetic recombination and DNA repair, while the RuvA-RuvB complex plays an important role in the rescue of blocked DNA replication forks via replication fork reversal (RFR). RuvA specifically binds to HJ cruciform DNA, conferring on it an open structure. The RuvB hexamer acts as an ATP-dependent pump, pulling dsDNA into and through the RuvAB complex. HJ branch migration allows RuvC to scan DNA until it finds its consensus sequence, where it cleaves and resolves the cruciform DNA. The polypeptide is Holliday junction branch migration complex subunit RuvA (Hathewaya histolytica (Clostridium histolyticum)).